Here is a 533-residue protein sequence, read N- to C-terminus: Tyrosine protein-kinase src-1 (533 aa).

Residue Gly2 is the site of N-myristoyl glycine attachment. Residues 71-132 (QERETLVALY…PRNFVAKQQT (62 aa)) enclose the SH3 domain. The region spanning 138–237 (WYAGKIPRNR…GLCCQLTFPA (100 aa)) is the SH2 domain. Residues 262–521 (LHLKRKLGDG…TLYHFFDDYF (260 aa)) enclose the Protein kinase domain. Residues 268 to 276 (LGDGNFGEV) and Lys290 contribute to the ATP site. Asp381 (proton acceptor) is an active-site residue. A Phosphotyrosine; by autocatalysis modification is found at Tyr416. Tyr528 bears the Phosphotyrosine mark.

The protein belongs to the protein kinase superfamily. Tyr protein kinase family. SRC subfamily. Interacts (via SH2 domain and SH3 domain) with unc-5 (via cytoplasmic domain); the interaction requires kinase activity. Interacts (when activated and phosphorylated at 'Tyr-416') with ina-1 (via cytoplasmic domain) and with ced-2 (via SH2 domain). Requires Mg(2+) as cofactor. It depends on Mn(2+) as a cofactor. In terms of processing, may be phosphorylated on Tyr-528 by csk-1. As to expression, expressed in some neurons (ASE, ADF, AVA, AUA, RMDV and BAG) in the head region, anchor cell, vulva, cells around anus, body wall muscle, pharyngeal muscles in procorpus and metacorpus. Expressed in gonadal distal tip cells.

The protein resides in the cell membrane. Its subcellular location is the cell projection. The protein localises to the phagocytic cup. The catalysed reaction is L-tyrosyl-[protein] + ATP = O-phospho-L-tyrosyl-[protein] + ADP + H(+). Its activity is regulated as follows. May be activated by autophosphorylation. May be inhibited by csk-1-mediated phosphorylation. Non-receptor tyrosine-protein kinase which plays a role in endoderm development by controlling spindle orientation in EMS blastomere, probably downstream of receptor mes-1. Also involved in embryonic body morphogenesis, especially in the formation of the pharynx and the intestine. May be dispensable for pharyngeal muscle organization in the adult. Probably phosphorylates netrin receptor unc-5, to regulate distal tip cell (DTC) migration during gonad development and in axon repulsion. Plays a role in the migration of the QR neuroblast, a precursor of the AVM neuron, and in the migration of the axon cone of AVM, ALM, CAN and PVM neurons. May act downstream of migratory protein mig-13 to control AVM neuron migration. Probably downstream of integrin ina-1/pat-3, plays a role in the clearance of apoptotic cells during mid-embryogenesis. Phosphorylates ced-1 at 'Tyr-1019' which promotes ced-1 proteasomal degradation, maintaining appropriate ced-1 levels for apoptotic cell clearance. This is Tyrosine protein-kinase src-1 from Caenorhabditis elegans.